The following is a 562-amino-acid chain: MSDQSVPSFRWTQSLRRGLSAWTTSVKADVLNDTRALLSGLDFAKVASVQRMMRRVKRDDSDLVGLRDLNKEVDSLMIMKSNQKNMFLKVGSLSKDELMELSSDLEKLKQKVQRTERVGNGTGQYQGNLSNTQLTRRSEILQLVGIQRAGLAPTGGVVKIWDIKDPSLLVNQFGSVPAVTISCMTEQGGESLNDVVQGLTDLGLLYTAKYPNLNDLKALTTKHPSLNIITQEESQINISGYNLSLSAAVKAGACLIDGGNMLETIKIEESTFTTVIKTLLEVKNKEKMFVSPTPGQRNPYENVLYKLCLSGDGWPYIASRSQIKGRAWDNTVVEFDTATVKEPIPIRNGGAPLLTTLKPEIENQVKRSVESLLINDTTWIDIEGPPNDPVEFAIYQPESQRYIHCYRRPNDIKSFKDQSKYCHGILLKDVENARPGLISSIIRSLPKSMVFTAQGADDIRKLFDMHGRQDLKIVDVKLSAEESRIFEDLVWKRFEHLCDKHKGIVIKSKKKGSTPATTNAHCALLDGVMFSAVISGSVSNEKPKRMLPIDLLFREPETTVVL.

Residues 53–238 (MRRVKRDDSD…ITQEESQINI (186 aa)) are binding site for the cap structure m7GTP. Residues D381 and E383 each coordinate Mn(2+). Positions 391, 498, 501, and 522 each coordinate Zn(2+). D526 serves as a coordination point for Mn(2+).

The protein belongs to the arenaviridae nucleocapsid protein family. In terms of assembly, homomultimerizes to form the nucleocapsid. Binds to viral genomic RNA. Interacts with glycoprotein G2. Interacts with protein Z; this interaction probably directs the encapsidated genome to budding sites. Interacts with protein L; this interaction does not interfere with Z-L interaction. Interacts with host IKBKE (via Protein kinase domain); the interaction inhibits IKBKE kinase activity.

It localises to the virion. The protein localises to the host cytoplasm. Its function is as follows. Encapsidates the genome, protecting it from nucleases. The encapsidated genomic RNA is termed the nucleocapsid (NC). Serves as template for viral transcription and replication. The increased presence of protein N in host cell does not seem to trigger the switch from transcription to replication as observed in other negative strain RNA viruses. Through the interaction with host IKBKE, strongly inhibits the phosphorylation and nuclear translocation of host IRF3, a protein involved in interferon activation pathway, leading to the inhibition of interferon-beta and IRF3-dependent promoters activation. Also encodes a functional 3'-5' exoribonuclease that degrades preferentially dsRNA substrates and thereby participates in the suppression of interferon induction. This is Nucleoprotein from Neotoma (wood rats).